The primary structure comprises 372 residues: UDP-N-acetylglucosamine--N-acetylmuramyl-(pentapeptide) pyrophosphoryl-undecaprenol N-acetylglucosamine transferase (372 aa).

UDP-N-acetyl-alpha-D-glucosamine contacts are provided by residues 10–12 (TGG), Asn-124, Arg-166, Ser-196, Ile-256, and Gln-301.

It belongs to the glycosyltransferase 28 family. MurG subfamily.

It is found in the cell membrane. It carries out the reaction di-trans,octa-cis-undecaprenyl diphospho-N-acetyl-alpha-D-muramoyl-L-alanyl-D-glutamyl-meso-2,6-diaminopimeloyl-D-alanyl-D-alanine + UDP-N-acetyl-alpha-D-glucosamine = di-trans,octa-cis-undecaprenyl diphospho-[N-acetyl-alpha-D-glucosaminyl-(1-&gt;4)]-N-acetyl-alpha-D-muramoyl-L-alanyl-D-glutamyl-meso-2,6-diaminopimeloyl-D-alanyl-D-alanine + UDP + H(+). The protein operates within cell wall biogenesis; peptidoglycan biosynthesis. In terms of biological role, cell wall formation. Catalyzes the transfer of a GlcNAc subunit on undecaprenyl-pyrophosphoryl-MurNAc-pentapeptide (lipid intermediate I) to form undecaprenyl-pyrophosphoryl-MurNAc-(pentapeptide)GlcNAc (lipid intermediate II). The protein is UDP-N-acetylglucosamine--N-acetylmuramyl-(pentapeptide) pyrophosphoryl-undecaprenol N-acetylglucosamine transferase of Desulforamulus reducens (strain ATCC BAA-1160 / DSM 100696 / MI-1) (Desulfotomaculum reducens).